Reading from the N-terminus, the 426-residue chain is Ornithine aminotransferase (426 aa).

The residue at position 291 (lysine 291) is an N6-(pyridoxal phosphate)lysine.

This sequence belongs to the class-III pyridoxal-phosphate-dependent aminotransferase family. Requires pyridoxal 5'-phosphate as cofactor.

It catalyses the reaction a 2-oxocarboxylate + L-ornithine = L-glutamate 5-semialdehyde + an L-alpha-amino acid. The protein operates within amino-acid biosynthesis; L-proline biosynthesis; L-glutamate 5-semialdehyde from L-ornithine: step 1/1. This is Ornithine aminotransferase from Vigna aconitifolia (Moth bean).